A 416-amino-acid chain; its full sequence is Exodeoxyribonuclease 7 large subunit (416 aa).

It belongs to the XseA family. Heterooligomer composed of large and small subunits.

The protein localises to the cytoplasm. It catalyses the reaction Exonucleolytic cleavage in either 5'- to 3'- or 3'- to 5'-direction to yield nucleoside 5'-phosphates.. Functionally, bidirectionally degrades single-stranded DNA into large acid-insoluble oligonucleotides, which are then degraded further into small acid-soluble oligonucleotides. This is Exodeoxyribonuclease 7 large subunit from Acidothermus cellulolyticus (strain ATCC 43068 / DSM 8971 / 11B).